A 270-amino-acid chain; its full sequence is 2-epi-5-epi-valiolone 7-phosphate 2-epimerase (270 aa).

Active-site proton donor/acceptor residues include E143 and E236.

It belongs to the hyi family.

It catalyses the reaction 2-epi-5-epi-valiolone 7-phosphate = 5-epi-valiolone 7-phosphate. Its function is as follows. Involved in the biosynthesis of the alpha-glucosidase inhibitor acarbose. Catalyzes the 2-epimerisation of 2-epi-5-epivaliolone 7-phosphate to yield 5-epi-valiolone 7-phosphate. The protein is 2-epi-5-epi-valiolone 7-phosphate 2-epimerase (acbO) of Actinoplanes sp. (strain ATCC 31044 / CBS 674.73 / SE50/110).